The sequence spans 254 residues: Phytolongin Phyl1.1 (254 aa).

The Longin domain maps to 12 to 113 (CVSRDNQILY…TAMIGSINVE (102 aa)). Residues 138–173 (ELKSSNLGEQSEGSNSTKAPLLGRLSKQEKKKGKDH) form a disordered region. The segment covering 145-155 (GEQSEGSNSTK) has biased composition (polar residues). Residues 226-246 (IVLAIDAAICLTLFGIWLAIC) traverse the membrane as a helical; Anchor for type IV membrane protein segment.

Belongs to the synaptobrevin family.

The protein localises to the membrane. Functionally, non-SNARE longin protein involved in membrane-trafficking machinery. In Arabidopsis thaliana (Mouse-ear cress), this protein is Phytolongin Phyl1.1.